We begin with the raw amino-acid sequence, 492 residues long: N-succinylglutamate 5-semialdehyde dehydrogenase (492 aa).

220-225 (GSASTG) contributes to the NAD(+) binding site. Active-site residues include E243 and C277.

It belongs to the aldehyde dehydrogenase family. AstD subfamily.

It carries out the reaction N-succinyl-L-glutamate 5-semialdehyde + NAD(+) + H2O = N-succinyl-L-glutamate + NADH + 2 H(+). The protein operates within amino-acid degradation; L-arginine degradation via AST pathway; L-glutamate and succinate from L-arginine: step 4/5. In terms of biological role, catalyzes the NAD-dependent reduction of succinylglutamate semialdehyde into succinylglutamate. The chain is N-succinylglutamate 5-semialdehyde dehydrogenase from Salmonella enteritidis PT4 (strain P125109).